A 361-amino-acid polypeptide reads, in one-letter code: GDSL esterase/lipase At2g40250 (361 aa).

An N-terminal signal peptide occupies residues 1-28; sequence MNRNQHKPMFVTFLINILLLQLLNLTNA. The Nucleophile role is filled by S43. Residues D337 and H340 contribute to the active site.

It belongs to the 'GDSL' lipolytic enzyme family.

The protein localises to the secreted. The sequence is that of GDSL esterase/lipase At2g40250 from Arabidopsis thaliana (Mouse-ear cress).